The primary structure comprises 218 residues: MGQKVHPIGMRIGVIRDWDSKWYAEKDYADFLHEDLRIRDYVAKRLSDASVSRVEIERAANRVNITIHTAKPGMVIGKGGSEVEALRKNLNELTQKRVHINIVEIKRADLDAKLVAENIARQLEGRVSFRRAQKQAIQRTMRAGAKGIKTQVSGRLGGADIARAEHYSEGTVPLHTLRADIDYAWEEADTTYGKLGVKVWIYRGEVLPTKKNNVEGGK.

The KH type-2 domain maps to 38–106; the sequence is IRDYVAKRLS…RVHINIVEIK (69 aa).

This sequence belongs to the universal ribosomal protein uS3 family. Part of the 30S ribosomal subunit. Forms a tight complex with proteins S10 and S14.

Its function is as follows. Binds the lower part of the 30S subunit head. Binds mRNA in the 70S ribosome, positioning it for translation. This is Small ribosomal subunit protein uS3 from Listeria monocytogenes serotype 4b (strain F2365).